A 427-amino-acid polypeptide reads, in one-letter code: Trigger factor (427 aa).

The region spanning 163-248 (GDVVNLDFDG…INEVKSKEVP (86 aa)) is the PPIase FKBP-type domain.

It belongs to the FKBP-type PPIase family. Tig subfamily.

The protein localises to the cytoplasm. The catalysed reaction is [protein]-peptidylproline (omega=180) = [protein]-peptidylproline (omega=0). Involved in protein export. Acts as a chaperone by maintaining the newly synthesized protein in an open conformation. Functions as a peptidyl-prolyl cis-trans isomerase. The protein is Trigger factor of Macrococcus caseolyticus (strain JCSC5402) (Macrococcoides caseolyticum).